Reading from the N-terminus, the 457-residue chain is UDP-N-acetylmuramate--L-alanine ligase (457 aa).

Position 109–115 (109–115 (GTDGKTT)) interacts with ATP.

This sequence belongs to the MurCDEF family.

It localises to the cytoplasm. It carries out the reaction UDP-N-acetyl-alpha-D-muramate + L-alanine + ATP = UDP-N-acetyl-alpha-D-muramoyl-L-alanine + ADP + phosphate + H(+). It functions in the pathway cell wall biogenesis; peptidoglycan biosynthesis. In terms of biological role, cell wall formation. The sequence is that of UDP-N-acetylmuramate--L-alanine ligase from Thermotoga sp. (strain RQ2).